The following is a 738-amino-acid chain: Alanine--tRNA ligase (738 aa).

Zn(2+)-binding residues include H564, H568, C666, and H670.

Belongs to the class-II aminoacyl-tRNA synthetase family. Homotetramer. Zn(2+) is required as a cofactor.

It localises to the cytoplasm. The enzyme catalyses tRNA(Ala) + L-alanine + ATP = L-alanyl-tRNA(Ala) + AMP + diphosphate. Functionally, catalyzes the attachment of alanine to tRNA(Ala) in a two-step reaction: alanine is first activated by ATP to form Ala-AMP and then transferred to the acceptor end of tRNA(Ala). Also edits incorrectly charged Ser-tRNA(Ala) and Gly-tRNA(Ala) via its editing domain. In Yersinia pestis bv. Antiqua (strain Antiqua), this protein is Alanine--tRNA ligase (alaS).